The chain runs to 307 residues: Ribosomal RNA small subunit methyltransferase H (307 aa).

S-adenosyl-L-methionine-binding positions include 32–34 (GGH), Asp52, Phe78, Asp100, and Gln107.

The protein belongs to the methyltransferase superfamily. RsmH family.

It is found in the cytoplasm. It carries out the reaction cytidine(1402) in 16S rRNA + S-adenosyl-L-methionine = N(4)-methylcytidine(1402) in 16S rRNA + S-adenosyl-L-homocysteine + H(+). Functionally, specifically methylates the N4 position of cytidine in position 1402 (C1402) of 16S rRNA. In Coxiella burnetii (strain Dugway 5J108-111), this protein is Ribosomal RNA small subunit methyltransferase H.